The sequence spans 217 residues: Endo-1,4-beta-xylanase (217 aa).

The signal sequence occupies residues 1–17; that stretch reads MQFLIPVVILCVSLVDS. In terms of domain architecture, GH11 spans 20-217; that stretch reads VLYNNEIGFN…SSGFADITVS (198 aa). N-linked (GlcNAc...) asparagine glycans are attached at residues N56 and N80. Residue E107 is the Nucleophile of the active site. The active-site Proton donor is E204.

Belongs to the glycosyl hydrolase 11 (cellulase G) family. Expressed in larval carcasses and gut, and adult gut.

Its subcellular location is the secreted. It catalyses the reaction Endohydrolysis of (1-&gt;4)-beta-D-xylosidic linkages in xylans.. It functions in the pathway glycan degradation; xylan degradation. The chain is Endo-1,4-beta-xylanase from Phaedon cochleariae (Mustard beetle).